A 795-amino-acid polypeptide reads, in one-letter code: Histidine biosynthesis trifunctional protein (795 aa).

Residues 1 to 225 (MLPVVPVFNA…VVRQGGSGSF (225 aa)) form a phosphoribosyl-AMP cyclohydrolase region. The interval 226 to 308 (CHLETESCFG…FYFAMARLVA (83 aa)) is phosphoribosyl-ATP pyrophosphohydrolase. The histidinol dehydrogenase stretch occupies residues 309-795 (NGVSLEDVER…KLGLLPSGFE (487 aa)). Zn(2+) contacts are provided by Gln614 and His617. Catalysis depends on residues Glu683 and His684. Asp717 and His776 together coordinate Zn(2+).

This sequence in the C-terminal section; belongs to the histidinol dehydrogenase family. It depends on Zn(2+) as a cofactor.

It carries out the reaction 1-(5-phospho-beta-D-ribosyl)-5'-AMP + H2O = 1-(5-phospho-beta-D-ribosyl)-5-[(5-phospho-beta-D-ribosylamino)methylideneamino]imidazole-4-carboxamide. The catalysed reaction is 1-(5-phospho-beta-D-ribosyl)-ATP + H2O = 1-(5-phospho-beta-D-ribosyl)-5'-AMP + diphosphate + H(+). It catalyses the reaction L-histidinol + 2 NAD(+) + H2O = L-histidine + 2 NADH + 3 H(+). The protein operates within amino-acid biosynthesis; L-histidine biosynthesis; L-histidine from 5-phospho-alpha-D-ribose 1-diphosphate: step 2/9. It participates in amino-acid biosynthesis; L-histidine biosynthesis; L-histidine from 5-phospho-alpha-D-ribose 1-diphosphate: step 3/9. It functions in the pathway amino-acid biosynthesis; L-histidine biosynthesis; L-histidine from 5-phospho-alpha-D-ribose 1-diphosphate: step 9/9. The sequence is that of Histidine biosynthesis trifunctional protein (HIS4) from Kluyveromyces lactis (strain ATCC 8585 / CBS 2359 / DSM 70799 / NBRC 1267 / NRRL Y-1140 / WM37) (Yeast).